The following is a 200-amino-acid chain: NADH-quinone oxidoreductase subunit C (200 aa).

It belongs to the complex I 30 kDa subunit family. NDH-1 is composed of 14 different subunits. Subunits NuoB, C, D, E, F, and G constitute the peripheral sector of the complex.

Its subcellular location is the cell inner membrane. It catalyses the reaction a quinone + NADH + 5 H(+)(in) = a quinol + NAD(+) + 4 H(+)(out). In terms of biological role, NDH-1 shuttles electrons from NADH, via FMN and iron-sulfur (Fe-S) centers, to quinones in the respiratory chain. The immediate electron acceptor for the enzyme in this species is believed to be ubiquinone. Couples the redox reaction to proton translocation (for every two electrons transferred, four hydrogen ions are translocated across the cytoplasmic membrane), and thus conserves the redox energy in a proton gradient. This Ralstonia pickettii (strain 12J) protein is NADH-quinone oxidoreductase subunit C.